Reading from the N-terminus, the 135-residue chain is UPF0102 protein Mjls_1965 (135 aa).

Belongs to the UPF0102 family.

This chain is UPF0102 protein Mjls_1965, found in Mycobacterium sp. (strain JLS).